A 326-amino-acid chain; its full sequence is MVWQRQHVLGLADFTPEEYQMVLQTSASFQEVLTRRLPKVPTLQGKVVVTLFFEPSTRTRSSFELAAKRLSADVLNFSPGTSSLSKGETLLDTARTFLAMGSDLLIVRHAQAGVPQQLAAEIDRRGSPVGVLNAGDGLHEHPTQGLLDLFTLCSHLDPRRPRLELLQGIKIAIVGDILHSRVARSDIYALVAAGAEVHLAGPPTLLPKDFAHFVPGHTLPVHWQLEPALEGARFVITLRLQQERMGEFLLPSLQEYHHFFGLTRQRLRLCHPDVKLLHPGPVNRGVELSSEVMEDPGLNLIEQQVTHGVAVRMALLYLMGGGRIPA.

Carbamoyl phosphate contacts are provided by Arg-58 and Thr-59. Residue Lys-86 participates in L-aspartate binding. Carbamoyl phosphate contacts are provided by Arg-108, His-141, and Gln-144. Residues Arg-181 and Arg-239 each coordinate L-aspartate. The carbamoyl phosphate site is built by Gly-280 and Pro-281.

Belongs to the aspartate/ornithine carbamoyltransferase superfamily. ATCase family. As to quaternary structure, heterododecamer (2C3:3R2) of six catalytic PyrB chains organized as two trimers (C3), and six regulatory PyrI chains organized as three dimers (R2).

The catalysed reaction is carbamoyl phosphate + L-aspartate = N-carbamoyl-L-aspartate + phosphate + H(+). It participates in pyrimidine metabolism; UMP biosynthesis via de novo pathway; (S)-dihydroorotate from bicarbonate: step 2/3. Functionally, catalyzes the condensation of carbamoyl phosphate and aspartate to form carbamoyl aspartate and inorganic phosphate, the committed step in the de novo pyrimidine nucleotide biosynthesis pathway. The sequence is that of Aspartate carbamoyltransferase catalytic subunit from Synechococcus sp. (strain JA-3-3Ab) (Cyanobacteria bacterium Yellowstone A-Prime).